The chain runs to 368 residues: Alcohol dehydrogenase 6 (368 aa).

Ser23 is subject to Phosphoserine. Zn(2+)-binding residues include Cys47, His69, Cys99, Cys102, Cys105, Cys113, and Cys175. NAD(+)-binding positions include 200–205 (GLGGVG), Asp224, Lys229, and 293–295 (VGV).

The protein belongs to the zinc-containing alcohol dehydrogenase family. Class-V subfamily. Dimer. Requires Zn(2+) as cofactor. Stomach and liver.

The protein resides in the cytoplasm. The catalysed reaction is a primary alcohol + NAD(+) = an aldehyde + NADH + H(+). The enzyme catalyses a secondary alcohol + NAD(+) = a ketone + NADH + H(+). Inhibited partially by pyrazole (10 mM) in the reaction mixture containing 100 mM ethanol at pH 10.0. In terms of biological role, alcohol dehydrogenase. Catalyzes the NAD-dependent oxidation of primary alcohols to the corresponding aldehydes. Oxidizes secondary alcohols to the corresponding ketones. The sequence is that of Alcohol dehydrogenase 6 (ADH6) from Homo sapiens (Human).